The following is a 57-amino-acid chain: UPF0391 membrane protein RPD_2934 (57 aa).

The next 2 helical transmembrane spans lie at 6–26 (WALI…TGVS) and 35–55 (ILFY…FTIF).

This sequence belongs to the UPF0391 family.

The protein localises to the cell membrane. In Rhodopseudomonas palustris (strain BisB5), this protein is UPF0391 membrane protein RPD_2934.